We begin with the raw amino-acid sequence, 661 residues long: UvrABC system protein B (661 aa).

Residues 26-413 (KGIQEGKKHQ…TDEMVEQIIR (388 aa)) enclose the Helicase ATP-binding domain. 39–46 (GATGTGKT) serves as a coordination point for ATP. Positions 92–115 (YYDYYQPEAYVPQTDTFIEKDASI) match the Beta-hairpin motif. Residues 430-596 (QIDDLIGEIQ…TINKEIRDVI (167 aa)) enclose the Helicase C-terminal domain. In terms of domain architecture, UVR spans 625-660 (QKVVEQMEHEMKEAAKALDFERAAELRDLLLELKAE).

The protein belongs to the UvrB family. In terms of assembly, forms a heterotetramer with UvrA during the search for lesions. Interacts with UvrC in an incision complex.

The protein resides in the cytoplasm. In terms of biological role, the UvrABC repair system catalyzes the recognition and processing of DNA lesions. A damage recognition complex composed of 2 UvrA and 2 UvrB subunits scans DNA for abnormalities. Upon binding of the UvrA(2)B(2) complex to a putative damaged site, the DNA wraps around one UvrB monomer. DNA wrap is dependent on ATP binding by UvrB and probably causes local melting of the DNA helix, facilitating insertion of UvrB beta-hairpin between the DNA strands. Then UvrB probes one DNA strand for the presence of a lesion. If a lesion is found the UvrA subunits dissociate and the UvrB-DNA preincision complex is formed. This complex is subsequently bound by UvrC and the second UvrB is released. If no lesion is found, the DNA wraps around the other UvrB subunit that will check the other stand for damage. The sequence is that of UvrABC system protein B from Bacillus subtilis (strain 168).